We begin with the raw amino-acid sequence, 291 residues long: Small ribosomal subunit biogenesis GTPase RsgA (291 aa).

Positions 63–221 constitute a CP-type G domain; that stretch reads KNELKRPPVS…IADTPGFSAL (159 aa). Residues 112–115 and 164–172 contribute to the GTP site; these read TKKD and GQSGVGKST. 4 residues coordinate Zn(2+): Cys245, Cys250, His252, and Cys258.

It belongs to the TRAFAC class YlqF/YawG GTPase family. RsgA subfamily. Monomer. Associates with 30S ribosomal subunit, binds 16S rRNA. Zn(2+) is required as a cofactor.

The protein resides in the cytoplasm. Its function is as follows. One of several proteins that assist in the late maturation steps of the functional core of the 30S ribosomal subunit. Helps release RbfA from mature subunits. May play a role in the assembly of ribosomal proteins into the subunit. Circularly permuted GTPase that catalyzes slow GTP hydrolysis, GTPase activity is stimulated by the 30S ribosomal subunit. The polypeptide is Small ribosomal subunit biogenesis GTPase RsgA (Staphylococcus aureus (strain MRSA252)).